The primary structure comprises 152 residues: NAD(P)H-quinone oxidoreductase subunit N (152 aa).

Belongs to the complex I NdhN subunit family. In terms of assembly, NDH-1 can be composed of about 15 different subunits; different subcomplexes with different compositions have been identified which probably have different functions.

The protein resides in the cellular thylakoid membrane. It catalyses the reaction a plastoquinone + NADH + (n+1) H(+)(in) = a plastoquinol + NAD(+) + n H(+)(out). The enzyme catalyses a plastoquinone + NADPH + (n+1) H(+)(in) = a plastoquinol + NADP(+) + n H(+)(out). Functionally, NDH-1 shuttles electrons from an unknown electron donor, via FMN and iron-sulfur (Fe-S) centers, to quinones in the respiratory and/or the photosynthetic chain. The immediate electron acceptor for the enzyme in this species is believed to be plastoquinone. Couples the redox reaction to proton translocation, and thus conserves the redox energy in a proton gradient. Cyanobacterial NDH-1 also plays a role in inorganic carbon-concentration. In Prochlorococcus marinus (strain SARG / CCMP1375 / SS120), this protein is NAD(P)H-quinone oxidoreductase subunit N.